We begin with the raw amino-acid sequence, 521 residues long: Bifunctional purine biosynthesis protein PurH (521 aa).

The 145-residue stretch at 1-145 (MIKQALISVS…KNHRDVTVVV (145 aa)) folds into the MGS-like domain.

It belongs to the PurH family.

It catalyses the reaction (6R)-10-formyltetrahydrofolate + 5-amino-1-(5-phospho-beta-D-ribosyl)imidazole-4-carboxamide = 5-formamido-1-(5-phospho-D-ribosyl)imidazole-4-carboxamide + (6S)-5,6,7,8-tetrahydrofolate. The catalysed reaction is IMP + H2O = 5-formamido-1-(5-phospho-D-ribosyl)imidazole-4-carboxamide. Its pathway is purine metabolism; IMP biosynthesis via de novo pathway; 5-formamido-1-(5-phospho-D-ribosyl)imidazole-4-carboxamide from 5-amino-1-(5-phospho-D-ribosyl)imidazole-4-carboxamide (10-formyl THF route): step 1/1. The protein operates within purine metabolism; IMP biosynthesis via de novo pathway; IMP from 5-formamido-1-(5-phospho-D-ribosyl)imidazole-4-carboxamide: step 1/1. This is Bifunctional purine biosynthesis protein PurH from Burkholderia ambifaria (strain ATCC BAA-244 / DSM 16087 / CCUG 44356 / LMG 19182 / AMMD) (Burkholderia cepacia (strain AMMD)).